The chain runs to 587 residues: Arginine--tRNA ligase (587 aa).

Residues Ala123–His133 carry the 'HIGH' region motif.

This sequence belongs to the class-I aminoacyl-tRNA synthetase family. Monomer.

It is found in the cytoplasm. It carries out the reaction tRNA(Arg) + L-arginine + ATP = L-arginyl-tRNA(Arg) + AMP + diphosphate. The protein is Arginine--tRNA ligase of Alkaliphilus oremlandii (strain OhILAs) (Clostridium oremlandii (strain OhILAs)).